The chain runs to 2684 residues: Teneurin-1 (2684 aa).

Disordered regions lie at residues 1–37 (MFQH…HDYT), 127–156 (TTSS…PTYS), and 170–204 (GTNQ…KKFD). Over 1 to 216 (MFQHRTTNAQ…SDTCSRWPSK (216 aa)) the chain is Cytoplasmic. Positions 11–24 (GPPPNRPMPRPPAG) are enriched in pro residues. Low complexity predominate over residues 127 to 136 (TTSSTLSPAS). The chain crosses the membrane as a helical span at residues 217-237 (WNILLAAALLVALFVICILLF). Topologically, residues 238–2684 (RAPNYVYTQP…VHSWKFRKSE (2447 aa)) are extracellular. EGF-like domains follow at residues 463–499 (TGRT…KECE) and 501–534 (RHNW…EACE). Cystine bridges form between Cys467–Cys476, Cys472–Cys487, Cys489–Cys498, Cys505–Cys516, Cys510–Cys522, and Cys524–Cys533. A disordered region spans residues 576-614 (PQAQSPPRRGQEPTESSKTRKAQVKPTPTSEKKKESREL). Composition is skewed to basic and acidic residues over residues 584–593 (RGQEPTESSK) and 605–614 (SEKKKESREL). EGF-like domains are found at residues 650-684 (DSVD…SNCT) and 716-753 (AIDG…VDCS). 6 cysteine pairs are disulfide-bonded: Cys654–Cys666, Cys659–Cys672, Cys674–Cys683, Cys720–Cys730, Cys724–Cys741, and Cys743–Cys752. NHL repeat units follow at residues 1276 to 1317 (DSCG…IDTT), 1334 to 1378 (RTCA…VVHD), 1398 to 1441 (SASA…VRKL), and 1470 to 1513 (AVSL…VSAR).

Belongs to the tenascin family. Teneurin subfamily. Post-translationally, probably proteolytically processed to generate a N-terminal intracellular domain. In terms of tissue distribution, isoform 1 is mainly expressed in organs derived from the mesoderm, including the pharynx, vulva muscles, gonad distal tip cells, intestine and several tail neurons. Isoform 2 is mainly expressed in the organs derived from the ectoderm, including hypodermal cells, head ganglion neurons and tail neurons (at protein level).

It is found in the nucleus. The protein resides in the cell membrane. Its subcellular location is the membrane. Functionally, plays a role in the gonadal basement membrane maintenance and/or adhesion early in development. Contributes to the guidance of pharyngeal neurons. This chain is Teneurin-1 (ten-1), found in Caenorhabditis elegans.